The sequence spans 367 residues: Peptide chain release factor 1 (367 aa).

Gln238 carries the post-translational modification N5-methylglutamine.

It belongs to the prokaryotic/mitochondrial release factor family. Methylated by PrmC. Methylation increases the termination efficiency of RF1.

The protein resides in the cytoplasm. Its function is as follows. Peptide chain release factor 1 directs the termination of translation in response to the peptide chain termination codons UAG and UAA. The sequence is that of Peptide chain release factor 1 from Dictyoglomus thermophilum (strain ATCC 35947 / DSM 3960 / H-6-12).